The sequence spans 163 residues: Crossover junction endodeoxyribonuclease RuvC (163 aa).

Catalysis depends on residues Asp-9, Glu-76, and Asp-148. Positions 9, 76, and 148 each coordinate Mg(2+).

This sequence belongs to the RuvC family. Homodimer which binds Holliday junction (HJ) DNA. The HJ becomes 2-fold symmetrical on binding to RuvC with unstacked arms; it has a different conformation from HJ DNA in complex with RuvA. In the full resolvosome a probable DNA-RuvA(4)-RuvB(12)-RuvC(2) complex forms which resolves the HJ. Mg(2+) serves as cofactor.

Its subcellular location is the cytoplasm. It carries out the reaction Endonucleolytic cleavage at a junction such as a reciprocal single-stranded crossover between two homologous DNA duplexes (Holliday junction).. Functionally, the RuvA-RuvB-RuvC complex processes Holliday junction (HJ) DNA during genetic recombination and DNA repair. Endonuclease that resolves HJ intermediates. Cleaves cruciform DNA by making single-stranded nicks across the HJ at symmetrical positions within the homologous arms, yielding a 5'-phosphate and a 3'-hydroxyl group; requires a central core of homology in the junction. The consensus cleavage sequence is 5'-(A/T)TT(C/G)-3'. Cleavage occurs on the 3'-side of the TT dinucleotide at the point of strand exchange. HJ branch migration catalyzed by RuvA-RuvB allows RuvC to scan DNA until it finds its consensus sequence, where it cleaves and resolves the cruciform DNA. This is Crossover junction endodeoxyribonuclease RuvC from Nostoc sp. (strain PCC 7120 / SAG 25.82 / UTEX 2576).